A 477-amino-acid polypeptide reads, in one-letter code: Transmembrane and coiled-coil domain protein 3 (477 aa).

Residues Met-1–Lys-24 are disordered. Ser-46 is modified (phosphoserine). Coiled-coil stretches lie at residues Lys-63–Lys-83 and Lys-112–Thr-149. A disordered region spans residues Ala-234–Thr-280. A Phosphoserine modification is found at Ser-253. Over residues Ser-258 to Thr-280 the composition is skewed to polar residues. Positions Gln-284–Gln-398 form a coiled coil. 2 helical membrane passes run Val-409 to Val-429 and Phe-450 to Ile-470.

It belongs to the TEX28 family. In terms of assembly, may form homodimers and heterodimers with TMCC2 or TMCC3 via the coiled-coil domains. Interacts with ribosomal proteins RPL4 and RPS6.

The protein localises to the endoplasmic reticulum membrane. This chain is Transmembrane and coiled-coil domain protein 3, found in Mus musculus (Mouse).